A 180-amino-acid chain; its full sequence is Large ribosomal subunit protein bL17 (180 aa).

Positions 134-180 (AQAKAKKAAAMPTEESEAKPAEEGDVVGASEPDAKAPEEPPTEAPEN) are disordered.

It belongs to the bacterial ribosomal protein bL17 family. In terms of assembly, part of the 50S ribosomal subunit. Contacts protein L32.

This chain is Large ribosomal subunit protein bL17, found in Mycobacterium tuberculosis (strain CDC 1551 / Oshkosh).